A 100-amino-acid polypeptide reads, in one-letter code: Integration host factor subunit alpha (100 aa).

Residues phenylalanine 53–isoleucine 72 form a disordered region.

This sequence belongs to the bacterial histone-like protein family. As to quaternary structure, heterodimer of an alpha and a beta chain.

In terms of biological role, this protein is one of the two subunits of integration host factor, a specific DNA-binding protein that functions in genetic recombination as well as in transcriptional and translational control. The protein is Integration host factor subunit alpha of Pseudomonas putida (strain ATCC 700007 / DSM 6899 / JCM 31910 / BCRC 17059 / LMG 24140 / F1).